The sequence spans 135 residues: Small ribosomal subunit protein uS12 (135 aa).

A 3-methylthioaspartic acid modification is found at Asp-89. Positions 106–135 (GVANRRQSRSKYGAKRPKAGAAQATKGGKK) are disordered. Positions 111-123 (RQSRSKYGAKRPK) are enriched in basic residues. A compositionally biased stretch (low complexity) spans 124–135 (AGAAQATKGGKK).

This sequence belongs to the universal ribosomal protein uS12 family. As to quaternary structure, part of the 30S ribosomal subunit. Contacts proteins S8 and S17. May interact with IF1 in the 30S initiation complex.

With S4 and S5 plays an important role in translational accuracy. Functionally, interacts with and stabilizes bases of the 16S rRNA that are involved in tRNA selection in the A site and with the mRNA backbone. Located at the interface of the 30S and 50S subunits, it traverses the body of the 30S subunit contacting proteins on the other side and probably holding the rRNA structure together. The combined cluster of proteins S8, S12 and S17 appears to hold together the shoulder and platform of the 30S subunit. The protein is Small ribosomal subunit protein uS12 of Hydrogenobaculum sp. (strain Y04AAS1).